The following is a 594-amino-acid chain: Arginine--tRNA ligase (594 aa).

The short motif at 133 to 143 (ANPTGPMNIVS) is the 'HIGH' region element.

This sequence belongs to the class-I aminoacyl-tRNA synthetase family. Monomer.

It is found in the cytoplasm. It catalyses the reaction tRNA(Arg) + L-arginine + ATP = L-arginyl-tRNA(Arg) + AMP + diphosphate. The protein is Arginine--tRNA ligase of Leptospira biflexa serovar Patoc (strain Patoc 1 / Ames).